The primary structure comprises 282 residues: Transcription factor HES-1 (282 aa).

A disordered region spans residues 1–44 (MPADIMEKNSSSPVAATPASVNTTPDKPKTASEHRKSSKPIMEK). Low complexity predominate over residues 10–21 (SSSPVAATPASV). Over residues 26 to 35 (DKPKTASEHR) the composition is skewed to basic and acidic residues. One can recognise a bHLH domain in the interval 34 to 91 (HRKSSKPIMEKRRRARINESLSQLKTLILDALKKDSSRHSKLEKADILEMTVKHLRNL). An Orange domain is found at 110–143 (YRAGFSECMNEVTRFLSTCEGVNTEVRTRLLGHL). Disordered regions lie at residues 158–204 (QAHP…GSAP) and 256–282 (TSVG…PWRN). 2 stretches are compositionally biased toward pro residues: residues 164 to 174 (QAPPPPPPSGP) and 182 to 202 (FAPP…PPGS). The span at 264–275 (SPSSGSSLTSDS) shows a compositional bias: low complexity. Positions 277–280 (WRPW) match the WRPW motif motif.

In terms of assembly, interacts with SIRT1. Transcription repression requires formation of a complex with a corepressor protein of the Groucho/TLE family. Interacts (via WPRW motif) with TLE1, and more weakly with TLE2. Interacts with HES6. Interacts with an FA complex, composed of FANCA, FANCF, FANCG and FANCL, but not of FANCC, nor FANCE. Expressed at high levels in undifferentiated neural precursor cells, but the level of expression decreases as neural differentiation proceeds.

It is found in the nucleus. Its function is as follows. Transcriptional repressor of genes that require a bHLH protein for their transcription. May act as a negative regulator of myogenesis by inhibiting the functions of MYOD1 and ASH1. Binds DNA on N-box motifs: 5'-CACNAG-3' with high affinity and on E-box motifs: 5'-CANNTG-3' with low affinity. May play a role in a functional FA core complex response to DNA cross-link damage, being required for the stability and nuclear localization of FA core complex proteins, as well as for FANCD2 monoubiquitination in response to DNA damage. This Mus musculus (Mouse) protein is Transcription factor HES-1 (Hes1).